A 197-amino-acid polypeptide reads, in one-letter code: MSNEHIVWHDSSITKNEYQQKNNHKSGIIWLTGLSGSGKSTIANAAARELFEQGYQVTVLDGDNVRHGLNKDLGFSDDDRKENIRRIGEVAKLFVEQGTIVITAFISPFQEDRRIVRQLVEAGEFHEVFVKCDLNVCEERDPKGLYKKARNGEIPFFTGIDSPYEEPAAPELVLDTGELSREESKQRLVDYVKEKAK.

ATP is bound at residue 33 to 40 (GLSGSGKS). Ser-107 (phosphoserine intermediate) is an active-site residue.

Belongs to the APS kinase family.

The catalysed reaction is adenosine 5'-phosphosulfate + ATP = 3'-phosphoadenylyl sulfate + ADP + H(+). It participates in sulfur metabolism; hydrogen sulfide biosynthesis; sulfite from sulfate: step 2/3. Its function is as follows. Catalyzes the synthesis of activated sulfate. In Bacillus pumilus (strain SAFR-032), this protein is Adenylyl-sulfate kinase.